Reading from the N-terminus, the 551-residue chain is Methionine--tRNA ligase (551 aa).

A 'HIGH' region motif is present at residues 12-22 (PYANGPLHFGH). Residues C144, C147, C157, and C160 each contribute to the Zn(2+) site. Residues 330–334 (QFSKS) carry the 'KMSKS' region motif. K333 provides a ligand contact to ATP.

Belongs to the class-I aminoacyl-tRNA synthetase family. MetG type 1 subfamily. Monomer. Zn(2+) serves as cofactor.

The protein resides in the cytoplasm. It catalyses the reaction tRNA(Met) + L-methionine + ATP = L-methionyl-tRNA(Met) + AMP + diphosphate. Functionally, is required not only for elongation of protein synthesis but also for the initiation of all mRNA translation through initiator tRNA(fMet) aminoacylation. This Chlamydia pneumoniae (Chlamydophila pneumoniae) protein is Methionine--tRNA ligase (metG).